Here is a 550-residue protein sequence, read N- to C-terminus: Crystal protein (550 aa).

An N-terminal signal peptide occupies residues M1–A19. C91 and C111 form a disulfide bridge. N-linked (GlcNAc...) asparagine glycosylation is present at N156. The active-site Acyl-ester intermediate is S215. C267 and C274 are disulfide-bonded. Catalysis depends on charge relay system residues E340 and H443. N506 carries N-linked (GlcNAc...) asparagine glycosylation.

This sequence belongs to the type-B carboxylesterase/lipase family.

It localises to the cytoplasmic vesicle. The protein resides in the esterosome membrane. This Dictyostelium discoideum (Social amoeba) protein is Crystal protein (cryS).